Consider the following 493-residue polypeptide: Dipeptide permease D (493 aa).

Over 1-13 the chain is Cytoplasmic; the sequence is MNKHASQPRAIYY. The chain crosses the membrane as a helical span at residues 14–34; it reads VVALQIWEYFSFYGMRALLIL. The Periplasmic portion of the chain corresponds to 35–48; the sequence is YLTNQLKYNDTHAY. A helical membrane pass occupies residues 49–69; it reads ELFSAYCSLVYVTPILGGFLA. Residues 70 to 77 lie on the Cytoplasmic side of the membrane; sequence DKVLGNRM. Residues 78 to 98 traverse the membrane as a helical segment; it reads AVMLGALLMAIGHVVLGASEI. Topologically, residues 99 to 100 are periplasmic; sequence HP. Residues 101–121 traverse the membrane as a helical segment; sequence SFLYLSLAIIVCGYGLFKSNV. The Cytoplasmic segment spans residues 122–137; the sequence is SCLLGELYEPTDPRRD. Residues 138–158 traverse the membrane as a helical segment; the sequence is GGFSLMYAAGNVGSIIAPIAC. Residues 159 to 166 lie on the Periplasmic side of the membrane; it reads GYAQEEYS. A helical membrane pass occupies residues 167-187; sequence WAMGFGLAAVGMIAGLVIFLC. The Cytoplasmic segment spans residues 188–211; sequence GNRHFTHTRGVNKKVLRATNFLLP. The helical transmembrane segment at 212 to 232 threads the bilayer; the sequence is NWGWLLVLLVATPALITILFW. The Periplasmic segment spans residues 233 to 234; it reads KE. A helical transmembrane segment spans residues 235-255; the sequence is WSVYALIVATIIGLGVLAKIY. Residues 256-266 lie on the Cytoplasmic side of the membrane; sequence RKAENQKQRKE. Residues 267-287 form a helical membrane-spanning segment; it reads LGLIVTLTFFSMLFWAFAQQG. The Periplasmic portion of the chain corresponds to 288 to 311; it reads GSSISLYIDRFVNRDMFGYTVPTA. Residues 312 to 332 traverse the membrane as a helical segment; the sequence is MFQSINAFAVMLCGVFLAWVV. Residues 333–343 are Cytoplasmic-facing; the sequence is KESVAGNRTVR. Residues 344-364 traverse the membrane as a helical segment; it reads IWGKFALGLGLMSAGFCILTL. Over 365–378 the chain is Periplasmic; it reads SARWSAMYGHSSLP. The chain crosses the membrane as a helical span at residues 379–399; that stretch reads LMVLGLAVMGFAELFIDPVAM. Topologically, residues 400 to 412 are cytoplasmic; the sequence is SQITRIEIPGVTG. A helical membrane pass occupies residues 413 to 433; it reads VLTGIYMLLSGAIANYLAGVI. Topologically, residues 434 to 461 are periplasmic; sequence ADQTSQASFDASGAINYSINAYIEVFDQ. A helical transmembrane segment spans residues 462–482; that stretch reads ITWGALACVGLVLMIWLYQAL. Topologically, residues 483–493 are cytoplasmic; sequence KFRNRALALES.

Belongs to the major facilitator superfamily. Proton-dependent oligopeptide transporter (POT/PTR) (TC 2.A.17) family. DtpD subfamily.

The protein resides in the cell inner membrane. Functionally, probable proton-dependent permease that transports dipeptides. The protein is Dipeptide permease D (dtpD) of Escherichia coli (strain K12).